Reading from the N-terminus, the 564-residue chain is Proline--tRNA ligase (564 aa).

It belongs to the class-II aminoacyl-tRNA synthetase family. ProS type 1 subfamily. In terms of assembly, homodimer.

The protein localises to the cytoplasm. The enzyme catalyses tRNA(Pro) + L-proline + ATP = L-prolyl-tRNA(Pro) + AMP + diphosphate. Catalyzes the attachment of proline to tRNA(Pro) in a two-step reaction: proline is first activated by ATP to form Pro-AMP and then transferred to the acceptor end of tRNA(Pro). As ProRS can inadvertently accommodate and process non-cognate amino acids such as alanine and cysteine, to avoid such errors it has two additional distinct editing activities against alanine. One activity is designated as 'pretransfer' editing and involves the tRNA(Pro)-independent hydrolysis of activated Ala-AMP. The other activity is designated 'posttransfer' editing and involves deacylation of mischarged Ala-tRNA(Pro). The misacylated Cys-tRNA(Pro) is not edited by ProRS. The protein is Proline--tRNA ligase of Thermosipho melanesiensis (strain DSM 12029 / CIP 104789 / BI429).